A 464-amino-acid polypeptide reads, in one-letter code: 2-oxoadipate dioxygenase/decarboxylase (464 aa).

Positions 70, 74, and 226 each coordinate 2-oxoadipate. Histidine 70 is a Fe(2+) binding site. The Fe(2+) site is built by histidine 226 and glutamate 294. Valine 402 lines the 2-oxoadipate pocket.

The protein belongs to the 2-oxoadipate dioxygenase/decarboxylase family. The cofactor is Fe(2+).

The enzyme catalyses 2-oxoadipate + O2 = (R)-2-hydroxyglutarate + CO2. It functions in the pathway amino-acid degradation. With respect to regulation, inhibited by EDTA. Catalyzes the decarboxylation and hydroxylation of 2-oxoadipate (2OA) to form D-2-hydroxyglutarate (D-2-HGA). Is specific for 2-oxoadipate. Is involved in a D-lysine catabolic pathway. The polypeptide is 2-oxoadipate dioxygenase/decarboxylase (Pseudomonas putida (strain ATCC 47054 / DSM 6125 / CFBP 8728 / NCIMB 11950 / KT2440)).